The primary structure comprises 109 residues: Nucleoid-associated protein NT01EI_1109 (109 aa).

Residues 89-109 (KERMASVSSGMQLPPGFKMPF) are disordered.

It belongs to the YbaB/EbfC family. As to quaternary structure, homodimer.

It localises to the cytoplasm. The protein localises to the nucleoid. Binds to DNA and alters its conformation. May be involved in regulation of gene expression, nucleoid organization and DNA protection. This is Nucleoid-associated protein NT01EI_1109 from Edwardsiella ictaluri (strain 93-146).